A 632-amino-acid polypeptide reads, in one-letter code: Serine/threonine-protein kinase plk-2 (632 aa).

Positions 1–26 (MQRVQPSAARVKSQKKEKAPPDVPDV) are disordered. Positions 36–287 (YEKGKFLGKG…ARAVCRDHFF (252 aa)) constitute a Protein kinase domain. ATP is bound by residues 42-50 (LGKGGFAHC) and Lys65. The active-site Proton acceptor is Asp159. The tract at residues 313 to 334 (AEENVSPSGTIDQRGPHQAGRS) is disordered. POLO box domains follow at residues 405–484 (WISK…YMND) and 506–588 (TLRV…RLVE).

It belongs to the protein kinase superfamily. Ser/Thr protein kinase family. CDC5/Polo subfamily. In terms of assembly, interacts (via POLO box domain) with mex-5 and mex-6. Interacts (via POLO box domain) with him-8 (via N-terminus); the interaction mediates plk-2 recruitment to the pairing region of X chromosomes during meiosis. Interacts with sun-1. May interact with nicotinic acetylcholine receptor. It depends on Mg(2+) as a cofactor. As to expression, expressed in oocytes.

The protein localises to the nucleus. It is found in the cytoplasm. The protein resides in the cytoskeleton. It localises to the microtubule organizing center. Its subcellular location is the centrosome. The protein localises to the chromosome. It is found in the centromere. The protein resides in the kinetochore. It carries out the reaction L-seryl-[protein] + ATP = O-phospho-L-seryl-[protein] + ADP + H(+). The enzyme catalyses L-threonyl-[protein] + ATP = O-phospho-L-threonyl-[protein] + ADP + H(+). Serine/threonine-protein kinase which plays a role, during oogenesis, in chromosome pairing and synapsis, by facilitating the recruitment and attachment of meiotic chromosomes to the nuclear envelope during prophase. Promotes the localization of brc-1 to the short arm of homologous chromosomes during meiotic prophase I. Regulates the formation of sun-1 patches along the nuclear envelope. Promotes meiotic nuclei apoptosis in response to chromosomal asynapsis. Plays a redundant role with plk-1 in the establishment of cell polarity downstream of mex-5 and mex-6 during the first embryonic cell divisions. Plays a role in nicotinic acetylcholine receptor-mediated sensitivity to nicotine but not levamisole. Regulates motility. This is Serine/threonine-protein kinase plk-2 from Caenorhabditis elegans.